The following is a 956-amino-acid chain: Glutamate receptor ionotropic, kainate 4 (956 aa).

Residues 1–20 form the signal peptide; sequence MPRVSAPLVLLPAWLLMVAC. The Extracellular segment spans residues 21–545; the sequence is SPHSLRIAAI…YFSFLDPFSP (525 aa). Residues asparagine 158, asparagine 220, asparagine 272, asparagine 286, asparagine 323, asparagine 408, asparagine 415, and asparagine 479 are each glycosylated (N-linked (GlcNAc...) asparagine). Residues glycine 500, threonine 502, and arginine 507 each coordinate L-glutamate. Residues 546-566 form a helical membrane-spanning segment; that stretch reads GVWLFMLLAYLAVSCVLFLVA. At 567–623 the chain is on the cytoplasmic side; sequence RLTPYEWYSPHPCAQGRCNLLVNQYSLGNSLWFPVGGFMQQGSTIAPRALSTRCVSG. Residues 624–644 form a helical membrane-spanning segment; that stretch reads VWWAFTLIIISSYTANLAAFL. Residues 645–804 are Extracellular-facing; it reads TVQRMEVPIE…HRAKGLGMEN (160 aa). Positions 674, 675, and 723 each coordinate L-glutamate. An N-linked (GlcNAc...) asparagine glycan is attached at asparagine 736. The chain crosses the membrane as a helical span at residues 805-825; it reads IGGIFVVLICGLIVAIFMAML. Over 826–956 the chain is Cytoplasmic; the sequence is EFLWTLRHSE…DKTTNSSEPE (131 aa). Residues 931 to 956 form a disordered region; that stretch reads LRARPSPARSEESLEWDKTTNSSEPE. Positions 939-948 are enriched in basic and acidic residues; the sequence is RSEESLEWDK.

It belongs to the glutamate-gated ion channel (TC 1.A.10.1) family. GRIK4 subfamily. Homodimer. Can form functional heteromeric receptors with GRIK1, GRIK2 and GRIK3 subunits. Forms a heteromeric complex with GRIK2. Expressed in the hippocampus and cerebellum (at protein level).

It is found in the cell membrane. The protein localises to the postsynaptic cell membrane. The protein resides in the presynaptic cell membrane. In terms of biological role, ionotropic glutamate receptor that functions as a cation-permeable ligand-gated ion channel. Cannot form functional channels on its own and produces channel activity only in heteromeric assembly with GRIK1, GRIK2 and GRIK3 subunits. The polypeptide is Glutamate receptor ionotropic, kainate 4 (Grik4) (Mus musculus (Mouse)).